Consider the following 189-residue polypeptide: Probable nicotinate-nucleotide adenylyltransferase (189 aa).

The protein belongs to the NadD family.

It carries out the reaction nicotinate beta-D-ribonucleotide + ATP + H(+) = deamido-NAD(+) + diphosphate. It participates in cofactor biosynthesis; NAD(+) biosynthesis; deamido-NAD(+) from nicotinate D-ribonucleotide: step 1/1. In terms of biological role, catalyzes the reversible adenylation of nicotinate mononucleotide (NaMN) to nicotinic acid adenine dinucleotide (NaAD). This is Probable nicotinate-nucleotide adenylyltransferase from Bacillus cereus (strain AH820).